The following is a 318-amino-acid chain: MNRFGTRLVGATATSSPPPKARSNENLDKIDMSLDDIIKLNRKEGKKQNFPRLNRRLLQQSGAQQFRMRVRWGIQQNSGFGKTSLNRRGRVMPGKRRPNGVITGLAARKTTGIRKGISPMNRPPLSDKNIEQYFPVLKRKANLLRQNEGQRKPVAVLKRPSQLSRKNNIPANFTRSGNKLNHQKDTRQATFLFRRGLKVQAQLNTEQLLDDVVAKRTRQWRTSTTNGGILTVSIDNPGAVQCPVTQKPRLTRTAVPSFLTKREQSDVKKVPKGVPLQFDINSVGKQTGMTLNERFGILKEQRATLTYNKGGSRFVTVG.

At Met1 the chain carries N-acetylmethionine. Residues 1 to 25 (MNRFGTRLVGATATSSPPPKARSNE) are disordered. Phosphothreonine is present on Thr14. Residues Ser16 and Ser23 each carry the phosphoserine modification. The short motif at 26-44 (NLDKIDMSLDDIIKLNRKE) is the UAP56-binding motif element. Ser61 bears the Phosphoserine mark. The disordered stretch occupies residues 79–100 (GFGKTSLNRRGRVMPGKRRPNG). Positions 85–98 (LNRRGRVMPGKRRP) are enriched in basic residues. Phosphoserine is present on Ser118. Residue Lys140 forms a Glycyl lysine isopeptide (Lys-Gly) (interchain with G-Cter in SUMO1) linkage. Lys261 is covalently cross-linked (Glycyl lysine isopeptide (Lys-Gly) (interchain with G-Cter in SUMO2)).

This sequence belongs to the UIF family. Interacts with CHTOP. Interacts with DDX39B/UAP56 and NXF1; interaction with DDX39B/UAP56 and NXF1 are mutually exclusive. Interacts with SSRP1; required for its recruitment to mRNAs. Expressed in a wide variety of cancer types.

The protein localises to the nucleus. It localises to the nucleoplasm. Its subcellular location is the nucleus speckle. In terms of biological role, required for mRNA export from the nucleus to the cytoplasm. Acts as an adapter that uses the DDX39B/UAP56-NFX1 pathway to ensure efficient mRNA export and delivering to the nuclear pore. Associates with spliced and unspliced mRNAs simultaneously with ALYREF/THOC4. The sequence is that of UAP56-interacting factor (FYTTD1) from Homo sapiens (Human).